We begin with the raw amino-acid sequence, 919 residues long: 2-oxoadipate dehydrogenase complex component E1 (919 aa).

N6-succinyllysine is present on residues lysine 183 and lysine 188. The disordered stretch occupies residues 299 to 320; sequence GKTRGRQQSRQDGDYSPDNSAQ. An N6-succinyllysine mark is found at lysine 800 and lysine 818.

The protein belongs to the alpha-ketoglutarate dehydrogenase family. In terms of assembly, the 2-oxoadipate dehydrogenase complex is composed of OADH (2-oxoadipate dehydrogenase; E1a), DLST (dihydrolipoamide succinyltransferase; E2) and DLD (dihydrolipoamide dehydrogenase; E3). E1a functional unit is a dimer. Interacts with DLST. Thiamine diphosphate is required as a cofactor.

It is found in the mitochondrion. It catalyses the reaction N(6)-[(R)-lipoyl]-L-lysyl-[protein] + 2-oxoadipate + H(+) = N(6)-[(R)-S(8)-glutaryldihydrolipoyl]-L-lysyl-[protein] + CO2. It functions in the pathway amino-acid degradation. Functionally, 2-oxoadipate dehydrogenase (E1a) component of the 2-oxoadipate dehydrogenase complex (OADHC). Participates in the first step, rate limiting for the overall conversion of 2-oxoadipate (alpha-ketoadipate) to glutaryl-CoA and CO(2) catalyzed by the whole OADHC. Catalyzes the irreversible decarboxylation of 2-oxoadipate via the thiamine diphosphate (ThDP) cofactor and subsequent transfer of the decarboxylated acyl intermediate on an oxidized dihydrolipoyl group that is covalently amidated to the E2 enzyme (dihydrolipoyllysine-residue succinyltransferase or DLST). Can catalyze the decarboxylation of 2-oxoglutarate in vitro, but at a much lower rate than 2-oxoadipate. Responsible for the last step of L-lysine, L-hydroxylysine and L-tryptophan catabolism with the common product being 2-oxoadipate. The polypeptide is 2-oxoadipate dehydrogenase complex component E1 (DHTKD1) (Homo sapiens (Human)).